A 530-amino-acid chain; its full sequence is MSHGQPPPGSSMYGFGAMGMGSGMGSGMGSGMGTGMGTGMGTGMSASQMTSDPQDMMSLLDTSVFPGFDGMSMSLDVGDSMSNPFTPVSVPPPLPAGNAGPSHVGVCGGHGAPDQLFSPDDLIATSMSSAGPMIATPTTTTSGPSGGPSSGGGSTLTEFTKRRNWPAKVVEELQDWEHILDANGRIKHVSPSVEPLTGYKPPEIIDLFLRDLIHPDDVGVFTAELNEAIATGSQLRLFYRFRKKDGNWTIFETVGHAHIAAAKFAPNPQNQSPFCQAVFMMARPYPTKNAGLLDSFLEHKIENERLKRRIAELRREEQEEQEESHRTWRMSQEGRSDVTPSDDTATQMGMTPFYIPMNAQADVMMPPPSQPASSLNIALTRENLEGIAGSRPDSIREKMLRYEGNHADTIEMLTGLKYQEGERSHGITTGNASPTLIKGDAGIAIPLDRDPRTGEKKKKIKVAEEYVCTDCGTLDSPEWRKGPSGPKTLCNACGLRWAKKEKKKNANNNNNGGGIGGHNDIHTPMGDHMG.

Tandem repeats lie at residues 9-12 (GSSM), 21-24 (GSGM), 25-28 (GSGM), 29-32 (GSGM), 33-36 (GTGM), 37-40 (GTGM), and 41-44 (GTGM). A 7 X 4 AA repeats of G-[SAT]-G-M region spans residues 9–44 (GSSMYGFGAMGMGSGMGSGMGSGMGTGMGTGMGTGM). Residues 134–158 (IATPTTTTSGPSGGPSSGGGSTLTE) are disordered. Over residues 144-154 (PSGGPSSGGGS) the composition is skewed to gly residues. Positions 162–232 (RRNWPAKVVE…AELNEAIATG (71 aa)) constitute a PAS domain. The tract at residues 315 to 343 (REEQEEQEESHRTWRMSQEGRSDVTPSDD) is disordered. Residues 468 to 493 (CTDCGTLDSPEWRKGPSGPKTLCNAC) form a GATA-type zinc finger. The segment at 504–530 (KNANNNNNGGGIGGHNDIHTPMGDHMG) is disordered.

In terms of assembly, heterodimer of wc-1 and wc-2 (Potential). Binds to DNA.

It is found in the nucleus. Functionally, may function as a transcription factor involved in light regulation. Binds and affects blue light regulation of the al-3 gene. Wc-1 and wc-2 interact via homologous PAS domains, bind to promoters of light regulated genes such as frq, and activate transcription. May bind directly to frq. The polypeptide is White collar 2 protein (wc-2) (Neurospora crassa (strain ATCC 24698 / 74-OR23-1A / CBS 708.71 / DSM 1257 / FGSC 987)).